A 157-amino-acid chain; its full sequence is SsrA-binding protein (157 aa).

Residues 131-157 (KQLHDKRESVKQRDWQRDKARLMRDKG) form a disordered region. Over residues 132-157 (QLHDKRESVKQRDWQRDKARLMRDKG) the composition is skewed to basic and acidic residues.

It belongs to the SmpB family.

It is found in the cytoplasm. Required for rescue of stalled ribosomes mediated by trans-translation. Binds to transfer-messenger RNA (tmRNA), required for stable association of tmRNA with ribosomes. tmRNA and SmpB together mimic tRNA shape, replacing the anticodon stem-loop with SmpB. tmRNA is encoded by the ssrA gene; the 2 termini fold to resemble tRNA(Ala) and it encodes a 'tag peptide', a short internal open reading frame. During trans-translation Ala-aminoacylated tmRNA acts like a tRNA, entering the A-site of stalled ribosomes, displacing the stalled mRNA. The ribosome then switches to translate the ORF on the tmRNA; the nascent peptide is terminated with the 'tag peptide' encoded by the tmRNA and targeted for degradation. The ribosome is freed to recommence translation, which seems to be the essential function of trans-translation. This chain is SsrA-binding protein, found in Methylorubrum populi (strain ATCC BAA-705 / NCIMB 13946 / BJ001) (Methylobacterium populi).